Consider the following 202-residue polypeptide: Small ribosomal subunit protein uS4 (202 aa).

A disordered region spans residues 16–43; it reads GELPGLSRKTPRRAYPPGQHGQGRRKRS. An S4 RNA-binding domain is found at 90-152; that stretch reads MRLDNTVFRL…DNSRRMVETN (63 aa).

It belongs to the universal ribosomal protein uS4 family. Part of the 30S ribosomal subunit. Contacts protein S5. The interaction surface between S4 and S5 is involved in control of translational fidelity.

One of the primary rRNA binding proteins, it binds directly to 16S rRNA where it nucleates assembly of the body of the 30S subunit. In terms of biological role, with S5 and S12 plays an important role in translational accuracy. This is Small ribosomal subunit protein uS4 from Crocosphaera subtropica (strain ATCC 51142 / BH68) (Cyanothece sp. (strain ATCC 51142)).